The chain runs to 55 residues: Large ribosomal subunit protein bL33 (55 aa).

The protein belongs to the bacterial ribosomal protein bL33 family.

This is Large ribosomal subunit protein bL33 from Sodalis glossinidius (strain morsitans).